Here is a 60-residue protein sequence, read N- to C-terminus: Large ribosomal subunit protein uL30 (60 aa).

It belongs to the universal ribosomal protein uL30 family. In terms of assembly, part of the 50S ribosomal subunit.

The polypeptide is Large ribosomal subunit protein uL30 (Streptococcus gordonii (strain Challis / ATCC 35105 / BCRC 15272 / CH1 / DL1 / V288)).